Reading from the N-terminus, the 377-residue chain is Queuine tRNA-ribosyltransferase (377 aa).

Catalysis depends on Asp-89, which acts as the Proton acceptor. Residues 89-93 (DSGGF), Asp-143, Gln-188, and Gly-215 each bind substrate. The RNA binding stretch occupies residues 246-252 (GVGKPED). The Nucleophile role is filled by Asp-265. The segment at 270 to 274 (TRNAR) is RNA binding; important for wobble base 34 recognition. The Zn(2+) site is built by Cys-303, Cys-305, Cys-308, and His-334.

Belongs to the queuine tRNA-ribosyltransferase family. As to quaternary structure, homodimer. Within each dimer, one monomer is responsible for RNA recognition and catalysis, while the other monomer binds to the replacement base PreQ1. It depends on Zn(2+) as a cofactor.

The catalysed reaction is 7-aminomethyl-7-carbaguanine + guanosine(34) in tRNA = 7-aminomethyl-7-carbaguanosine(34) in tRNA + guanine. It participates in tRNA modification; tRNA-queuosine biosynthesis. Catalyzes the base-exchange of a guanine (G) residue with the queuine precursor 7-aminomethyl-7-deazaguanine (PreQ1) at position 34 (anticodon wobble position) in tRNAs with GU(N) anticodons (tRNA-Asp, -Asn, -His and -Tyr). Catalysis occurs through a double-displacement mechanism. The nucleophile active site attacks the C1' of nucleotide 34 to detach the guanine base from the RNA, forming a covalent enzyme-RNA intermediate. The proton acceptor active site deprotonates the incoming PreQ1, allowing a nucleophilic attack on the C1' of the ribose to form the product. After dissociation, two additional enzymatic reactions on the tRNA convert PreQ1 to queuine (Q), resulting in the hypermodified nucleoside queuosine (7-(((4,5-cis-dihydroxy-2-cyclopenten-1-yl)amino)methyl)-7-deazaguanosine). This is Queuine tRNA-ribosyltransferase from Acinetobacter baumannii (strain AB307-0294).